The sequence spans 1072 residues: Carbamoyl phosphate synthase large chain (1072 aa).

The carboxyphosphate synthetic domain stretch occupies residues 1 to 401; it reads MPKRLDINTI…SLLKAVRSLE (401 aa). ATP contacts are provided by Arg129, Arg169, Gly175, Gly176, Lys208, Ile210, Glu215, Gly241, Val242, His243, Gln284, and Glu298. The 195-residue stretch at 133–327 folds into the ATP-grasp 1 domain; that stretch reads RTLMQELNEP…IAKLAAKIAV (195 aa). Positions 284, 298, and 300 each coordinate Mg(2+). Positions 284, 298, and 300 each coordinate Mn(2+). The tract at residues 402–546 is oligomerization domain; it reads LGIYHLELDH…YSTYADENEL (145 aa). The segment at 547–929 is carbamoyl phosphate synthetic domain; it reads IVTDRKSVVV…ALYKGLVASG (383 aa). The 191-residue stretch at 671-861 folds into the ATP-grasp 2 domain; that stretch reads EAALTKLGIP…MANVATKVIL (191 aa). ATP is bound by residues Arg707, Arg746, Glu752, Gly777, Val778, His779, Ser780, Gln820, and Glu832. 3 residues coordinate Mg(2+): Gln820, Glu832, and Asn834. Gln820, Glu832, and Asn834 together coordinate Mn(2+). The MGS-like domain occupies 930-1072; sequence INIPTHGSVI…QTKRHEVVHA (143 aa). Positions 930-1072 are allosteric domain; the sequence is INIPTHGSVI…QTKRHEVVHA (143 aa).

This sequence belongs to the CarB family. In terms of assembly, composed of two chains; the small (or glutamine) chain promotes the hydrolysis of glutamine to ammonia, which is used by the large (or ammonia) chain to synthesize carbamoyl phosphate. Tetramer of heterodimers (alpha,beta)4. Requires Mg(2+) as cofactor. Mn(2+) serves as cofactor.

The catalysed reaction is hydrogencarbonate + L-glutamine + 2 ATP + H2O = carbamoyl phosphate + L-glutamate + 2 ADP + phosphate + 2 H(+). It carries out the reaction hydrogencarbonate + NH4(+) + 2 ATP = carbamoyl phosphate + 2 ADP + phosphate + 2 H(+). Its pathway is amino-acid biosynthesis; L-arginine biosynthesis; carbamoyl phosphate from bicarbonate: step 1/1. The protein operates within pyrimidine metabolism; UMP biosynthesis via de novo pathway; (S)-dihydroorotate from bicarbonate: step 1/3. Its function is as follows. Large subunit of the glutamine-dependent carbamoyl phosphate synthetase (CPSase). CPSase catalyzes the formation of carbamoyl phosphate from the ammonia moiety of glutamine, carbonate, and phosphate donated by ATP, constituting the first step of 2 biosynthetic pathways, one leading to arginine and/or urea and the other to pyrimidine nucleotides. The large subunit (synthetase) binds the substrates ammonia (free or transferred from glutamine from the small subunit), hydrogencarbonate and ATP and carries out an ATP-coupled ligase reaction, activating hydrogencarbonate by forming carboxy phosphate which reacts with ammonia to form carbamoyl phosphate. In Bacillus anthracis (strain A0248), this protein is Carbamoyl phosphate synthase large chain.